We begin with the raw amino-acid sequence, 256 residues long: Imidazole glycerol phosphate synthase subunit HisF (256 aa).

Residues D13 and D132 contribute to the active site.

The protein belongs to the HisA/HisF family. Heterodimer of HisH and HisF.

It is found in the cytoplasm. It catalyses the reaction 5-[(5-phospho-1-deoxy-D-ribulos-1-ylimino)methylamino]-1-(5-phospho-beta-D-ribosyl)imidazole-4-carboxamide + L-glutamine = D-erythro-1-(imidazol-4-yl)glycerol 3-phosphate + 5-amino-1-(5-phospho-beta-D-ribosyl)imidazole-4-carboxamide + L-glutamate + H(+). It functions in the pathway amino-acid biosynthesis; L-histidine biosynthesis; L-histidine from 5-phospho-alpha-D-ribose 1-diphosphate: step 5/9. Its function is as follows. IGPS catalyzes the conversion of PRFAR and glutamine to IGP, AICAR and glutamate. The HisF subunit catalyzes the cyclization activity that produces IGP and AICAR from PRFAR using the ammonia provided by the HisH subunit. The protein is Imidazole glycerol phosphate synthase subunit HisF of Leptospira borgpetersenii serovar Hardjo-bovis (strain JB197).